We begin with the raw amino-acid sequence, 358 residues long: uncharacterized protein (358 aa).

A compositionally biased stretch (low complexity) spans arginine 70–arginine 88. Residues arginine 70–alanine 93 form a disordered region. The Macro domain occupies proline 178–glutamate 353.

This is an uncharacterized protein from Mycobacterium bovis (strain ATCC BAA-935 / AF2122/97).